Reading from the N-terminus, the 136-residue chain is MLQPKRTKFRKMQKGRNRGLSVNSEINFGKFGLKAIQRGRLTSRQIESARRAMSRSIKRQGKIWIRVFPDKPITKKPLEVRMGKGKGNVEYWVALIQPGKILYEIDEVSETIARYAFKLATAKLPITTTFVNKMVM.

Belongs to the universal ribosomal protein uL16 family. As to quaternary structure, part of the 50S ribosomal subunit.

Binds 23S rRNA and is also seen to make contacts with the A and possibly P site tRNAs. In Wigglesworthia glossinidia brevipalpis, this protein is Large ribosomal subunit protein uL16.